Reading from the N-terminus, the 478-residue chain is MLKFYQMKYIFQILDKMRCLRKRSTVSFLGVLVVFLLFMNLYIEDSYVLEGDKQLIRETSTHQLNSERYVHTFKDLSNFSGTINVTYRYLAATPLQRKRYLTIGLSSVKRKKGNYLLDTIKSIFEQSSYEELKEISVVVHLADFNSSWRDAMVQDITQKFAHHIIAGRLMVIHAPEEYYPVLDGLKRNYNDPEDRVRFRSKQNVDYAFLLNFCANTSDYYVMLEDDVRCSRNFLTAIKKVIASLEGTYWVTLEFSKLGYIGKLYHSHDLPRLAHFLLMFYQEMPCDWLLTHFRGLLAQKNVIRFKPSLFQHMGYYSSYKGTENKLKDDDFEEESFDIPDNPPASFYTNMNVFENYEASKAYSSVDEYFWGKSPSMGDTFVIVFENPITIKKIKVNTGTEDRQNDILQHGALDVGEKLIFSKQIRQCDTYLRLGEFKNGYFEMSDVNQKIPFDIHCMRICVTKTQKEWLIIRSISIWTS.

The Cytoplasmic portion of the chain corresponds to 1–25 (MLKFYQMKYIFQILDKMRCLRKRST). The chain crosses the membrane as a helical; Signal-anchor for type II membrane protein span at residues 26-43 (VSFLGVLVVFLLFMNLYI). The Lumenal segment spans residues 44 to 478 (EDSYVLEGDK…IIRSISIWTS (435 aa)). N-linked (GlcNAc...) asparagine glycosylation is found at Asn-84 and Asn-215.

Belongs to the glycosyltransferase 54 family. A divalent metal cation serves as cofactor.

It is found in the golgi apparatus membrane. It carries out the reaction N(4)-{beta-D-GlcNAc-(1-&gt;2)-alpha-D-Man-(1-&gt;3)-[beta-D-GlcNAc-(1-&gt;2)-alpha-D-Man-(1-&gt;6)]-beta-D-Man-(1-&gt;4)-beta-D-GlcNAc-(1-&gt;4)-beta-D-GlcNAc}-L-asparaginyl-[protein] + UDP-N-acetyl-alpha-D-glucosamine = N(4)-{beta-D-GlcNAc-(1-&gt;2)-[beta-D-GlcNAc-(1-&gt;4)]-alpha-D-Man-(1-&gt;3)-[beta-D-GlcNAc-(1-&gt;2)-alpha-D-Man-(1-&gt;6)]-beta-D-Man-(1-&gt;4)-beta-D-GlcNAc-(1-&gt;4)-beta-D-GlcNAc}-L-asparaginyl-[protein] + UDP + H(+). It participates in protein modification; protein glycosylation. Glycosyltransferase that participates in the transfer of N-acetylglucosamine (GlcNAc) to the core mannose residues of N-linked glycans. Catalyzes the formation of the GlcNAcbeta1-4 branch on the GlcNAcbeta1-2Manalpha1-3 arm of the core structure of N-linked glycans. Essential for the production of tri- and tetra-antennary N-linked sugar chains. Does not catalyze the transfer of GlcNAc to the Manalpha1-6 arm to form GlcNAcBeta1-4Manalpha1-6 linkage ('GnT-VI' activity). The protein is Alpha-1,3-mannosyl-glycoprotein 4-beta-N-acetylglucosaminyltransferase C (Mgat4c) of Mus musculus (Mouse).